A 275-amino-acid chain; its full sequence is Interleukin-2 receptor subunit alpha (275 aa).

Residues 1–21 (MEPSLLLWGILTFVVVHGHVT) form the signal peptide. Residues 22–84 (ELCDENPPDI…SWENQCRCIS (63 aa)) enclose the Sushi 1 domain. Residues 22 to 243 (ELCDENPPDI…ESFVFTTEYQ (222 aa)) are Extracellular-facing. 3 cysteine pairs are disulfide-bonded: Cys24–Cys67, Cys49–Cys80, and Cys51–Cys82. Asn60 and Asn70 each carry an N-linked (GlcNAc...) asparagine glycan. A disordered region spans residues 91 to 118 (DGQIIPKPEEQKGKSPMGMQSQMQPTDQ). Residues 108–118 (GMQSQMQPTDQ) show a composition bias toward polar residues. Residues 123-186 (GHCREPPPWE…WTQPRLQCLS (64 aa)) enclose the Sushi 2 domain. 2 disulfides stabilise this stretch: Cys125–Cys168 and Cys152–Cys184. A disordered region spans residues 188–213 (RSDGWFPDDEEPQASTDAALGSDTSC). Residues 244–262 (IAVAGCVLLLISIVLLSGL) form a helical membrane-spanning segment. Over 263–275 (TWQRRWRKSRRTI) the chain is Cytoplasmic.

In terms of assembly, non-covalent dimer of an alpha and a beta subunit. IL2R exists in 3 different forms: a high affinity dimer, an intermediate affinity monomer (beta subunit), and a low affinity monomer (alpha subunit). The high and intermediate affinity forms also associate with a gamma subunit.

The protein localises to the membrane. In terms of biological role, receptor for interleukin-2. The receptor is involved in the regulation of immune tolerance by controlling regulatory T cells (TREGs) activity. TREGs suppress the activation and expansion of autoreactive T-cells. The chain is Interleukin-2 receptor subunit alpha (IL2RA) from Felis catus (Cat).